Consider the following 279-residue polypeptide: 3-methyl-2-oxobutanoate hydroxymethyltransferase (279 aa).

2 residues coordinate Mg(2+): Asp43 and Asp82. Residues 43–44 (DS), Asp82, and Lys112 each bind 3-methyl-2-oxobutanoate. Glu114 contributes to the Mg(2+) binding site. Glu181 serves as the catalytic Proton acceptor.

It belongs to the PanB family. In terms of assembly, homodecamer; pentamer of dimers. Mg(2+) serves as cofactor.

Its subcellular location is the cytoplasm. It catalyses the reaction 3-methyl-2-oxobutanoate + (6R)-5,10-methylene-5,6,7,8-tetrahydrofolate + H2O = 2-dehydropantoate + (6S)-5,6,7,8-tetrahydrofolate. Its pathway is cofactor biosynthesis; (R)-pantothenate biosynthesis; (R)-pantoate from 3-methyl-2-oxobutanoate: step 1/2. Functionally, catalyzes the reversible reaction in which hydroxymethyl group from 5,10-methylenetetrahydrofolate is transferred onto alpha-ketoisovalerate to form ketopantoate. The sequence is that of 3-methyl-2-oxobutanoate hydroxymethyltransferase from Exiguobacterium sibiricum (strain DSM 17290 / CCUG 55495 / CIP 109462 / JCM 13490 / 255-15).